We begin with the raw amino-acid sequence, 130 residues long: Large ribosomal subunit protein bL12 (130 aa).

It belongs to the bacterial ribosomal protein bL12 family. Homodimer. Part of the ribosomal stalk of the 50S ribosomal subunit. Forms a multimeric L10(L12)X complex, where L10 forms an elongated spine to which 2 to 4 L12 dimers bind in a sequential fashion. Binds GTP-bound translation factors.

Its function is as follows. Forms part of the ribosomal stalk which helps the ribosome interact with GTP-bound translation factors. Is thus essential for accurate translation. This chain is Large ribosomal subunit protein bL12, found in Mycolicibacterium paratuberculosis (strain ATCC BAA-968 / K-10) (Mycobacterium paratuberculosis).